The primary structure comprises 361 residues: Ornithine carbamoyltransferase, mitochondrial (361 aa).

A mitochondrion-targeting transit peptide spans 1 to 24 (MIPTARCGALRQKIPVQAVRQYSS). Residues 89–92 (STRT), arginine 140, histidine 167, and glutamine 170 contribute to the carbamoyl phosphate site. The L-ornithine site is built by asparagine 207, aspartate 273, serine 277, and methionine 278. Cysteine 315 serves as the catalytic Proton acceptor. Residues 315-316 (CL) and arginine 342 each bind carbamoyl phosphate.

The protein belongs to the aspartate/ornithine carbamoyltransferase superfamily. OTCase family. In terms of assembly, homotrimer.

Its subcellular location is the mitochondrion matrix. The enzyme catalyses carbamoyl phosphate + L-ornithine = L-citrulline + phosphate + H(+). The protein operates within amino-acid biosynthesis; L-arginine biosynthesis; L-arginine from L-ornithine and carbamoyl phosphate: step 1/3. The protein is Ornithine carbamoyltransferase, mitochondrial (arg1) of Aspergillus terreus.